The primary structure comprises 148 residues: Lipoprotein signal peptidase (148 aa).

2 helical membrane-spanning segments follow: residues 57-77 (VLLV…FIKY) and 88-105 (VSFI…RIFY). Active-site residues include D110 and D129. The chain crosses the membrane as a helical span at residues 124–144 (TFNIADILVVVGTIMLAIFLL).

The protein belongs to the peptidase A8 family.

It localises to the cell membrane. It catalyses the reaction Release of signal peptides from bacterial membrane prolipoproteins. Hydrolyzes -Xaa-Yaa-Zaa-|-(S,diacylglyceryl)Cys-, in which Xaa is hydrophobic (preferably Leu), and Yaa (Ala or Ser) and Zaa (Gly or Ala) have small, neutral side chains.. It functions in the pathway protein modification; lipoprotein biosynthesis (signal peptide cleavage). Its function is as follows. This protein specifically catalyzes the removal of signal peptides from prolipoproteins. The chain is Lipoprotein signal peptidase from Clostridium novyi (strain NT).